We begin with the raw amino-acid sequence, 143 residues long: Large ribosomal subunit protein uL15 (143 aa).

Residues 1–54 (MQLNSIKPAPGAKHPKRRVGRGIGSGLGKTAGRGHKGQKSRAGGFHKVGFEGGQ) are disordered. Residues 21 to 31 (RGIGSGLGKTA) are compositionally biased toward gly residues.

This sequence belongs to the universal ribosomal protein uL15 family. In terms of assembly, part of the 50S ribosomal subunit.

Its function is as follows. Binds to the 23S rRNA. In Nitrosospira multiformis (strain ATCC 25196 / NCIMB 11849 / C 71), this protein is Large ribosomal subunit protein uL15.